Reading from the N-terminus, the 182-residue chain is Ferritin heavy chain (182 aa).

Met1 is subject to N-acetylmethionine. An N-acetylthreonine; in Ferritin heavy chain, N-terminally processed modification is found at Thr2. Residues 11–160 form the Ferritin-like diiron domain; the sequence is QNYHQDSEAA…DHVTNLRKMG (150 aa). Glu28, Glu63, His66, Glu108, and Gln142 together coordinate Fe cation.

The protein belongs to the ferritin family. In terms of assembly, oligomer of 24 subunits. There are two types of subunits: L (light) chain and H (heavy) chain. The major chain can be light or heavy, depending on the species and tissue type. The functional molecule forms a roughly spherical shell with a diameter of 12 nm and contains a central cavity into which the insoluble mineral iron core is deposited. Interacts with NCOA4; NCOA4 promotes targeting of the iron-binding ferritin complex to autolysosomes following starvation or iron depletion.

It localises to the cytoplasm. It is found in the lysosome. The protein resides in the cytoplasmic vesicle. The protein localises to the autophagosome. The catalysed reaction is 4 Fe(2+) + O2 + 4 H(+) = 4 Fe(3+) + 2 H2O. Functionally, stores iron in a soluble, non-toxic, readily available form. Important for iron homeostasis. Has ferroxidase activity. Iron is taken up in the ferrous form and deposited as ferric hydroxides after oxidation. Also plays a role in delivery of iron to cells. Mediates iron uptake in capsule cells of the developing kidney. Delivery to lysosomes is mediated by the cargo receptor NCOA4 for autophagic degradation and release of iron. In Rattus norvegicus (Rat), this protein is Ferritin heavy chain (Fth1).